The chain runs to 94 residues: Large ribosomal subunit protein bL25 (94 aa).

This sequence belongs to the bacterial ribosomal protein bL25 family. In terms of assembly, part of the 50S ribosomal subunit; part of the 5S rRNA/L5/L18/L25 subcomplex. Contacts the 5S rRNA. Binds to the 5S rRNA independently of L5 and L18.

This is one of the proteins that binds to the 5S RNA in the ribosome where it forms part of the central protuberance. This Edwardsiella ictaluri (strain 93-146) protein is Large ribosomal subunit protein bL25.